The primary structure comprises 284 residues: MAESEAETPGTPGEFESKYFEFHGVRLPPFCRGKMEDIADFPVRPSDVWIVTYPKSGTSLLQEVVYLVSQGADPDEIGLMNIDEQLPVLEYPQPGLDIIKELTSPRLIKSHLPYRFLPSDLHNGDSKVIYMARNPKDLVVSYYQFHRSLRTMSYRGTFQEFCRRFMNDKLGYGSWFEHVQEFWEHRMDANVLFLKYEDMHRDLVTMVEQLARFLGVSCDKAQLESLIEHCHQLVDQCCNAEALPVGRGRVGLWKDIFTVSMNEKFDLVYKQKMGKCDLTFDFYL.

A phosphothreonine mark is found at Thr8, Thr11, and Thr205.

The protein belongs to the sulfotransferase 1 family. In terms of tissue distribution, expressed in brain, cerebellum and hypothalamus. Not detected in pancreas, liver, lung, intestine, kidney, uterus, adrenal gland, thymus, spleen, epididymis, testicle, and heart.

The protein resides in the cytoplasm. Functionally, atypical sulfotransferase family member with very low affinity for 3'-phospho-5'-adenylyl sulfate (PAPS) and very low catalytic activity towards L-triiodothyronine, thyroxine, estrone, p-nitrophenol, 2-naphthylamine, and 2-beta-naphthol. May have a role in the metabolism of drugs and neurotransmitters in the CNS. This Mus musculus (Mouse) protein is Sulfotransferase 4A1 (Sult4a1).